A 163-amino-acid chain; its full sequence is NADH-quinone oxidoreductase subunit I (163 aa).

4Fe-4S ferredoxin-type domains lie at 53 to 83 and 94 to 123; these read LRRYPNGEERCIACKLCEAVCPACAITIEAG and TLYDIDAFKCINCGFCEEACPVDAIVLTPE. Residues C63, C66, C69, C73, C103, C106, C109, and C113 each contribute to the [4Fe-4S] cluster site.

Belongs to the complex I 23 kDa subunit family. In terms of assembly, NDH-1 is composed of 14 different subunits. Subunits NuoA, H, J, K, L, M, N constitute the membrane sector of the complex. The cofactor is [4Fe-4S] cluster.

The protein localises to the cell inner membrane. It catalyses the reaction a quinone + NADH + 5 H(+)(in) = a quinol + NAD(+) + 4 H(+)(out). Its function is as follows. NDH-1 shuttles electrons from NADH, via FMN and iron-sulfur (Fe-S) centers, to quinones in the respiratory chain. The immediate electron acceptor for the enzyme in this species is believed to be ubiquinone. Couples the redox reaction to proton translocation (for every two electrons transferred, four hydrogen ions are translocated across the cytoplasmic membrane), and thus conserves the redox energy in a proton gradient. This is NADH-quinone oxidoreductase subunit I from Coxiella burnetii (strain Dugway 5J108-111).